The following is a 152-amino-acid chain: D-aminoacyl-tRNA deacylase 1 (152 aa).

Residues 140–141 (GP) carry the Gly-cisPro motif, important for rejection of L-amino acids motif.

It belongs to the DTD family. In terms of assembly, homodimer.

It is found in the cytoplasm. It carries out the reaction glycyl-tRNA(Ala) + H2O = tRNA(Ala) + glycine + H(+). The enzyme catalyses a D-aminoacyl-tRNA + H2O = a tRNA + a D-alpha-amino acid + H(+). In terms of biological role, an aminoacyl-tRNA editing enzyme that deacylates mischarged D-aminoacyl-tRNAs. Hydrolyzes correctly charged, achiral, glycyl-tRNA(Gly). Deacylates mischarged D.melanogaster and E.coli glycyl-tRNA(Ala), protecting cells against glycine mischarging by AlaRS. Acts via tRNA-based rather than protein-based catalysis; rejects L-amino acids rather than detecting D-amino acids in the active site. By recycling D-aminoacyl-tRNA to D-amino acids and free tRNA molecules, this enzyme counteracts the toxicity associated with the formation of D-aminoacyl-tRNA entities in vivo and helps enforce protein L-homochirality. This chain is D-aminoacyl-tRNA deacylase 1 (dtd1), found in Leishmania major.